The sequence spans 546 residues: MEDPESLGFEHMGLDHRLLQAVTDLGWSRPTLIQEKAIPLALEGKDLLARARTGSGKTAAYAIPMLQLLLHRKATGPVVEQAVRALVLVPTKELARQAQSMIQQLAAYCARDIRVANVSAAEDSASQRAVLMEKPDVVVGTPSRILNHLQQDNLKLRDSMELLVVDEADLLFSFGFEEELKSLLCHLPRIYQAFLMSATFNEDVQALKELVLHNPVTLKLQESQLPGPDQLQQFQVVCETEEDKFLLLYALLKLSLIRGKSLLFVNTLERSYRLRLFLEQFSIPACVLNGELPLRSRCHIISQFNQGFYDCVIATDAEVLGPPVKGKHRGKGPKRDKASDPEAGVARGIDFHHVCAVLNFDLPPTPEAYIHRAGRTARANNPGIVLTFVLPTEQSQLGKIEELLSGDSGAPVLLPYQFHMEEIEGFRYRCRDAMRSVTKQAIREARLKEIKEELLHSEKLKTYFEDNPRDLQLLRHDLPLHPAVVKPHLGNVPDYLVPPALRGLVHPHKKRKKPLASKKAKKAKTQNPLRSFKHRGEKCRPTAAPS.

The short motif at 7–35 (LGFEHMGLDHRLLQAVTDLGWSRPTLIQE) is the Q motif element. One can recognise a Helicase ATP-binding domain in the interval 38–218 (IPLALEGKDL…ELVLHNPVTL (181 aa)). 51-58 (ARTGSGKT) is a binding site for ATP. At Ser126 the chain carries Phosphoserine. Thr141 carries the phosphothreonine modification. The DEAD box motif lies at 166-169 (DEAD). In terms of domain architecture, Helicase C-terminal spans 230-424 (QLQQFQVVCE…PYQFHMEEIE (195 aa)). Disordered regions lie at residues 323–342 (PVKG…SDPE) and 504–546 (LVHP…AAPS). A compositionally biased stretch (basic residues) spans 505 to 524 (VHPHKKRKKPLASKKAKKAK). A Phosphoserine modification is found at Ser531.

Belongs to the DEAD box helicase family. DDX56/DBP9 subfamily. May form homooligomeric complexes. Interacts with IRF3. Interacts with OCT4 and POU5F1.

The protein localises to the nucleus. It localises to the nucleolus. It catalyses the reaction ATP + H2O = ADP + phosphate + H(+). Functionally, nucleolar RNA helicase that plays a role in various biological processes including innate immunity, ribosome biogenesis or nucleolus organization. Plays an essential role in maintaining nucleolar integrity in planarian stem cells. Maintains embryonic stem cells proliferation by conventional regulation of ribosome assembly and interaction with OCT4 and POU5F1 complex. Regulates antiviral innate immunity by inhibiting the virus-triggered signaling nuclear translocation of IRF3. Mechanistically, acts by disrupting the interaction between IRF3 and importin IPO5. May play a role in later stages of the processing of the pre-ribosomal particles leading to mature 60S ribosomal subunits. Has intrinsic ATPase activity. The sequence is that of Probable ATP-dependent RNA helicase DDX56 (DDX56) from Bos taurus (Bovine).